Here is a 210-residue protein sequence, read N- to C-terminus: Protein MSO1 (210 aa).

Met-1 carries the post-translational modification N-acetylmethionine. Met-2 bears the N-acetylserine mark. The disordered stretch occupies residues 88 to 210 (KHDMKKQNSR…LKRRNNDYGF (123 aa)). Ser-102 carries the phosphoserine modification. The segment covering 117 to 141 (TPSSNGNTPEYTPASKSFQDIYNNH) has biased composition (polar residues). Composition is skewed to low complexity over residues 142 to 161 (TSSS…RPSA) and 172 to 183 (SKTSNSFNTSST).

As to quaternary structure, interacts physically with SEC1.

In terms of biological role, involved in secretion. Component of the secretory vesicle docking complex. This is Protein MSO1 (MSO1) from Saccharomyces cerevisiae (strain ATCC 204508 / S288c) (Baker's yeast).